Here is a 178-residue protein sequence, read N- to C-terminus: Probable DNA-directed RNA polymerase subunit delta (178 aa).

One can recognise an HTH HARE-type domain in the interval 14–81 (LSLIDVAHFI…GNNTWGLRAW (68 aa)). Disordered stretches follow at residues 88-122 (DEEV…DYDD) and 141-178 (LDED…PEDK). 3 stretches are compositionally biased toward acidic residues: residues 105–122 (DDED…DYDD), 141–150 (LDEDEDDDDH), and 161–178 (TVED…PEDK).

It belongs to the RpoE family. As to quaternary structure, RNAP is composed of a core of 2 alpha, a beta and a beta' subunits. The core is associated with a delta subunit and one of several sigma factors.

Its function is as follows. Participates in both the initiation and recycling phases of transcription. In the presence of the delta subunit, RNAP displays an increased specificity of transcription, a decreased affinity for nucleic acids, and an increased efficiency of RNA synthesis because of enhanced recycling. The polypeptide is Probable DNA-directed RNA polymerase subunit delta (Listeria monocytogenes serovar 1/2a (strain ATCC BAA-679 / EGD-e)).